The chain runs to 610 residues: Nuclear factor 7, ovary (610 aa).

Residues 21 to 75 form the Tudor-knot domain; that stretch reads NVGSTYPCKRSDGSQHDADIVKTRYNKQAGREEYYVHYVGLNRRQNEWVDKSRLV. The disordered stretch occupies residues 79–127; it reads PPKEVETNGTDQEEMTEPTEQPDSKTPQKRKLEEPEPEPKKAKVEDKDA. Position 104 is a phosphothreonine; by CDK1 (threonine 104). Positions 108–127 are enriched in basic and acidic residues; it reads RKLEEPEPEPKKAKVEDKDA. The segment at 146–186 adopts an RING-type zinc-finger fold; that stretch reads CPLCVELFKDPVMVACGHNFCRSCIDKVWEGQSSFACPECK. The B box-type zinc finger occupies 220–261; it reads RPLEKCSEHDERLKLYCKDDGTLGCVICRDSLKHASHNFLPI. Residues cysteine 225, histidine 228, cysteine 247, and histidine 253 each contribute to the Zn(2+) site. Positions 295-374 form a coiled coil; sequence DKIEQHNKNV…AKERMEETDS (80 aa). The region spanning 415 to 610 is the B30.2/SPRY domain; it reads PIQYIMWKEL…VDALRFVHNQ (196 aa).

As to quaternary structure, monomer. In terms of tissue distribution, abundant in oocytes. At the neurula stage, low expression in dorsal embryo region including neural folds and somites.

Its subcellular location is the nucleus. Transcription factor that determines dorsal-ventral body axis. In Xenopus laevis (African clawed frog), this protein is Nuclear factor 7, ovary.